Consider the following 179-residue polypeptide: Large ribosomal subunit protein uL5 (179 aa).

The protein belongs to the universal ribosomal protein uL5 family. Part of the 50S ribosomal subunit; part of the 5S rRNA/L5/L18/L25 subcomplex. Contacts the 5S rRNA and the P site tRNA. Forms a bridge to the 30S subunit in the 70S ribosome.

This is one of the proteins that bind and probably mediate the attachment of the 5S RNA into the large ribosomal subunit, where it forms part of the central protuberance. In the 70S ribosome it contacts protein S13 of the 30S subunit (bridge B1b), connecting the 2 subunits; this bridge is implicated in subunit movement. Contacts the P site tRNA; the 5S rRNA and some of its associated proteins might help stabilize positioning of ribosome-bound tRNAs. This chain is Large ribosomal subunit protein uL5, found in Sodalis glossinidius (strain morsitans).